The sequence spans 805 residues: Transitional endoplasmic reticulum ATPase (805 aa).

Position 3 is a phosphoserine (serine 3). ATP is bound by residues 247 to 253, asparagine 348, histidine 384, and 521 to 526; these read PGTGKTL and GCGKTL. The segment at 768-805 is disordered; sequence FGSFRFPAGGQGGAGPSQGAGGGSGGSHFNEEEDDLYG. The span at 776–793 shows a compositional bias: gly residues; that stretch reads GGQGGAGPSQGAGGGSGG.

It belongs to the AAA ATPase family. In terms of assembly, homohexamer. Forms a ring-shaped particle of 12.5 nm diameter, that displays 6-fold radial symmetry. Interacts with the FACT/DUF complex, which includes subunits ssrp1/duf87 and supt16h/duf140. Post-translationally, phosphorylated.

Its subcellular location is the cytoplasm. The protein localises to the cytosol. It is found in the endoplasmic reticulum. The protein resides in the nucleus. It localises to the stress granule. It catalyses the reaction ATP + H2O = ADP + phosphate + H(+). Its activity is regulated as follows. ATPase activity is inhibited or reduced by lowering pH from 9.0 to 7.0, and by addition of Ca(2+), EDTA, KNO(3) or by treatment with N-ethylmaleimide (NEM). In terms of biological role, necessary for the fragmentation of Golgi stacks during mitosis and for their reassembly after mitosis. Involved in the formation of the nuclear envelope, and of the transitional endoplasmic reticulum (tER). The transfer of membranes from the endoplasmic reticulum to the Golgi apparatus occurs via 50-70 nm transition vesicles which derive from part-rough, part-smooth transitional elements of the endoplasmic reticulum (tER). Vesicle budding from the tER is an ATP-dependent process. Involved in endoplasmic reticulum stress-induced pre-emptive quality control, a mechanism that selectively attenuates the translocation of newly synthesized proteins into the endoplasmic reticulum and reroutes them to the cytosol for proteasomal degradation. Involved in clearance process by mediating G3BP1 extraction from stress granules. Also involved in DNA damage response: recruited to double-strand breaks (DSBs) sites and promotes the recruitment of tp53bp1 at DNA damage sites. Together with sprtn metalloprotease, involved in the repair of covalent DNA-protein cross-links (DPCs) during DNA synthesis. Involved in interstrand cross-link repair in response to replication stress by mediating unloading of the ubiquitinated CMG helicase complex. Enhances cell cycle progression and inhibits apoptosis at low temperatures. Essential for the maturation of ubiquitin-containing autophagosomes and the clearance of ubiquitinated protein by autophagy. Acts as a negative regulator of type I interferon production by promoting ubiquitination of rigi. May play a role in the ubiquitin-dependent sorting of membrane proteins to lysosomes where they undergo degradation. May more particularly play a role in caveolins sorting in cells. By controlling the steady-state expression of the IGF1R receptor, indirectly regulates the insulin-like growth factor receptor signaling pathway. The polypeptide is Transitional endoplasmic reticulum ATPase (Xenopus tropicalis (Western clawed frog)).